The chain runs to 164 residues: FMN reductase (NADH) RutF (164 aa).

Belongs to the non-flavoprotein flavin reductase family. RutF subfamily.

The catalysed reaction is FMNH2 + NAD(+) = FMN + NADH + 2 H(+). Catalyzes the reduction of FMN to FMNH2 which is used to reduce pyrimidine by RutA via the Rut pathway. The protein is FMN reductase (NADH) RutF of Escherichia coli O127:H6 (strain E2348/69 / EPEC).